A 405-amino-acid polypeptide reads, in one-letter code: Maintenance of mitochondrial morphology protein 1 (405 aa).

The Lumenal portion of the chain corresponds to 1–86 (MQVLNFYVNP…TGSTKSFTQG (86 aa)). The helical transmembrane segment at 87–107 (LIIGQLSVIILLGIFIKFFVF) threads the bilayer. The Cytoplasmic portion of the chain corresponds to 108–405 (ADSSTTSSTS…QPVSTTESDH (298 aa)). The 220-residue stretch at 166–385 (APESLDWFNV…EPRFQVVKLP (220 aa)) folds into the SMP-LTD domain. A disordered region spans residues 303–324 (SEPRVAMDSPQSTRDDNSEEPN).

It belongs to the MMM1 family. In terms of assembly, homodimer. Component of the ER-mitochondria encounter structure (ERMES) or MDM complex, composed of MMM1, MDM10, MDM12 and MDM34. An MMM1 homodimer associates with one molecule of MDM12 on each side in a pairwise head-to-tail manner, and the SMP-LTD domains of MMM1 and MDM12 generate a continuous hydrophobic tunnel for phospholipid trafficking.

Its subcellular location is the endoplasmic reticulum membrane. Its function is as follows. Component of the ERMES/MDM complex, which serves as a molecular tether to connect the endoplasmic reticulum (ER) and mitochondria. Components of this complex are involved in the control of mitochondrial shape and protein biogenesis, and function in nonvesicular lipid trafficking between the ER and mitochondria. The MDM12-MMM1 subcomplex functions in the major beta-barrel assembly pathway that is responsible for biogenesis of all outer membrane beta-barrel proteins, and acts in a late step after the SAM complex. The MDM10-MDM12-MMM1 subcomplex further acts in the TOM40-specific pathway after the action of the MDM12-MMM1 complex. Essential for establishing and maintaining the structure of mitochondria and maintenance of mtDNA nucleoids. In Meyerozyma guilliermondii (strain ATCC 6260 / CBS 566 / DSM 6381 / JCM 1539 / NBRC 10279 / NRRL Y-324) (Yeast), this protein is Maintenance of mitochondrial morphology protein 1.